A 280-amino-acid polypeptide reads, in one-letter code: Ribonuclease P protein subunit p38 (280 aa).

Alanine 2 carries the N-acetylalanine modification. 3 positions are modified to phosphoserine: serine 12, serine 221, and serine 230. A disordered region spans residues tryptophan 202–leucine 227. The segment covering leucine 214–isoleucine 226 has biased composition (acidic residues). The segment at glutamine 254 to lysine 280 is disordered. Basic residues predominate over residues lysine 267 to lysine 280.

Belongs to the eukaryotic ribosomal protein eL8 family. In terms of assembly, component of nuclear RNase P and RNase MRP ribonucleoproteins. RNase P consists of a catalytic RNA moiety and about 10 protein subunits; POP1, POP4, POP5, POP7, RPP14, RPP21, RPP25, RPP30, RPP38 and RPP40. Within the RNase P complex, POP1, POP7 and RPP25 form the 'finger' subcomplex, POP5, RPP14, RPP40 and homodimeric RPP30 form the 'palm' subcomplex, and RPP21, POP4 and RPP38 form the 'wrist' subcomplex. All subunits of the RNase P complex interact with the catalytic RNA. Several subunits of RNase P are also part of the RNase MRP complex. RNase MRP consists of a catalytic RNA moiety and about 8 protein subunits; POP1, POP7, RPP25, RPP30, RPP38, RPP40 and possibly also POP4 and POP5.

The protein resides in the nucleus. It localises to the nucleolus. Functionally, component of ribonuclease P, a ribonucleoprotein complex that generates mature tRNA molecules by cleaving their 5'-ends. Also a component of the MRP ribonuclease complex, which cleaves pre-rRNA sequences. This chain is Ribonuclease P protein subunit p38 (Rpp38), found in Mus musculus (Mouse).